A 239-amino-acid polypeptide reads, in one-letter code: Endonuclease V (239 aa).

Asp50 and Asp118 together coordinate Mg(2+).

The protein belongs to the endonuclease V family. The cofactor is Mg(2+).

It is found in the cytoplasm. The catalysed reaction is Endonucleolytic cleavage at apurinic or apyrimidinic sites to products with a 5'-phosphate.. Its function is as follows. DNA repair enzyme involved in the repair of deaminated bases. Selectively cleaves double-stranded DNA at the second phosphodiester bond 3' to a deoxyinosine leaving behind the intact lesion on the nicked DNA. This chain is Endonuclease V, found in Xylella fastidiosa (strain Temecula1 / ATCC 700964).